The chain runs to 376 residues: 1-acyl-sn-glycerol-3-phosphate acyltransferase 3 (376 aa).

The next 2 helical transmembrane spans lie at 14-34 and 49-69; these read VLFL…FIIV and VAEL…CIKI. An HXXXXD motif motif is present at residues 92 to 97; it reads HRSDID. Helical transmembrane passes span 98–118, 306–326, and 335–355; these read WLIG…LAIM, LIVV…LLQW, and IILL…ILIQ.

This sequence belongs to the 1-acyl-sn-glycerol-3-phosphate acyltransferase family. In terms of tissue distribution, predominantly expressed in pollen.

Its subcellular location is the membrane. The enzyme catalyses a 1-acyl-sn-glycero-3-phosphate + an acyl-CoA = a 1,2-diacyl-sn-glycero-3-phosphate + CoA. It participates in phospholipid metabolism; CDP-diacylglycerol biosynthesis; CDP-diacylglycerol from sn-glycerol 3-phosphate: step 2/3. Its function is as follows. Converts lysophosphatidic acid (LPA) into phosphatidic acid by incorporating acyl moiety at the 2 position. Has preference for C-18-CoA substrates compared to C-16-CoA substrates. In Arabidopsis thaliana (Mouse-ear cress), this protein is 1-acyl-sn-glycerol-3-phosphate acyltransferase 3 (LPAT3).